The chain runs to 182 residues: Bifunctional protein PyrR (182 aa).

A PRPP-binding motif is present at residues 99-111 (IVLVDDVIFTGRT).

This sequence belongs to the purine/pyrimidine phosphoribosyltransferase family. PyrR subfamily. In terms of assembly, homodimer and homohexamer; in equilibrium.

The catalysed reaction is UMP + diphosphate = 5-phospho-alpha-D-ribose 1-diphosphate + uracil. Its function is as follows. Regulates transcriptional attenuation of the pyrimidine nucleotide (pyr) operon by binding in a uridine-dependent manner to specific sites on pyr mRNA. This disrupts an antiterminator hairpin in the RNA and favors formation of a downstream transcription terminator, leading to a reduced expression of downstream genes. In terms of biological role, also displays a weak uracil phosphoribosyltransferase activity which is not physiologically significant. The protein is Bifunctional protein PyrR of Caldicellulosiruptor saccharolyticus (strain ATCC 43494 / DSM 8903 / Tp8T 6331).